The primary structure comprises 117 residues: EVKLVESGGGLVQPGGSLRLSCATSGFTFTDYYMSWVRQPPGKALEWLGFIRNKABGYTTEYSAVKGRFTISRBBSZGILYLQMNTLRAQDSATYYCARDITEFAYWGZGTLVTVSS.

Positions 1 to 113 (EVKLVESGGG…FAYWGZGTLV (113 aa)) constitute an Ig-like domain.

This chain is Ig heavy chain V region MOPC 47A, found in Mus musculus (Mouse).